Reading from the N-terminus, the 561-residue chain is Asparagine synthetase [glutamine-hydrolyzing] (561 aa).

Cys-2 functions as the For GATase activity in the catalytic mechanism. In terms of domain architecture, Glutamine amidotransferase type-2 spans 2 to 191 (CGIWALFGSD…PGHYEVLDLK (190 aa)). L-glutamine is bound by residues 49 to 53 (RLAVV), 75 to 77 (NGE), and Asp-97. An Asparagine synthetase domain is found at 213 to 536 (HALYDNVEKL…PGRADWLSHY (324 aa)). Residues Leu-256, Ile-288, and 363–364 (SG) each bind ATP. N6-acetyllysine is present on Lys-385. The residue at position 545 (Thr-545) is a Phosphothreonine. Ser-557 is modified (phosphoserine).

The enzyme catalyses L-aspartate + L-glutamine + ATP + H2O = L-asparagine + L-glutamate + AMP + diphosphate + H(+). It functions in the pathway amino-acid biosynthesis; L-asparagine biosynthesis; L-asparagine from L-aspartate (L-Gln route): step 1/1. The protein is Asparagine synthetase [glutamine-hydrolyzing] (ASNS) of Homo sapiens (Human).